Here is a 101-residue protein sequence, read N- to C-terminus: NAD(P)H-quinone oxidoreductase subunit 4L, chloroplastic (101 aa).

The next 3 helical transmembrane spans lie at 2–22, 32–52, and 61–81; these read MLEH…YGLI, MCLE…SDFF, and IFSI…PAIV.

The protein belongs to the complex I subunit 4L family. In terms of assembly, NDH is composed of at least 16 different subunits, 5 of which are encoded in the nucleus.

It is found in the plastid. The protein resides in the chloroplast thylakoid membrane. It catalyses the reaction a plastoquinone + NADH + (n+1) H(+)(in) = a plastoquinol + NAD(+) + n H(+)(out). It carries out the reaction a plastoquinone + NADPH + (n+1) H(+)(in) = a plastoquinol + NADP(+) + n H(+)(out). Functionally, NDH shuttles electrons from NAD(P)H:plastoquinone, via FMN and iron-sulfur (Fe-S) centers, to quinones in the photosynthetic chain and possibly in a chloroplast respiratory chain. The immediate electron acceptor for the enzyme in this species is believed to be plastoquinone. Couples the redox reaction to proton translocation, and thus conserves the redox energy in a proton gradient. The chain is NAD(P)H-quinone oxidoreductase subunit 4L, chloroplastic from Manihot esculenta (Cassava).